The chain runs to 103 residues: MYAVVATGGKQYKVSEGDIIYVEKLEAEVDSTIELDKVLMINKDEGLVVGKPVVEGAKVKAKVLKQGKAKKIIVFKYKPKKDYRKKQGHRQPYTKLQIEKIDA.

The protein belongs to the bacterial ribosomal protein bL21 family. As to quaternary structure, part of the 50S ribosomal subunit. Contacts protein L20.

In terms of biological role, this protein binds to 23S rRNA in the presence of protein L20. The chain is Large ribosomal subunit protein bL21 from Clostridium kluyveri (strain NBRC 12016).